Reading from the N-terminus, the 44-residue chain is Metallothionein-4 (44 aa).

This sequence belongs to the metallothionein superfamily. Type 5 family.

In terms of biological role, this protein binds cations of several transition elements. Thought to be involved in metal ion homeostasis. In Drosophila melanogaster (Fruit fly), this protein is Metallothionein-4 (MtnD).